The chain runs to 257 residues: Acetylglutamate kinase (257 aa).

Substrate is bound by residues 43-44 (GG), arginine 65, and asparagine 157. Residues 180–185 (DVSGIL) and 208–210 (IIT) contribute to the ATP site.

This sequence belongs to the acetylglutamate kinase family. ArgB subfamily. As to quaternary structure, homodimer.

It is found in the cytoplasm. The enzyme catalyses N-acetyl-L-glutamate + ATP = N-acetyl-L-glutamyl 5-phosphate + ADP. Its pathway is amino-acid biosynthesis; L-arginine biosynthesis; N(2)-acetyl-L-ornithine from L-glutamate: step 2/4. Functionally, catalyzes the ATP-dependent phosphorylation of N-acetyl-L-glutamate. The chain is Acetylglutamate kinase from Pectobacterium carotovorum subsp. carotovorum (strain PC1).